Here is a 666-residue protein sequence, read N- to C-terminus: tRNA 5-methylaminomethyl-2-thiouridine biosynthesis bifunctional protein MnmC (666 aa).

The segment at 1–253 (MSSPFVPIIT…KRHMICAHYE (253 aa)) is tRNA (mnm(5)s(2)U34)-methyltransferase. The segment at 283–666 (VGGGLAGCFI…FLRKKIIQGP (384 aa)) is FAD-dependent cmnm(5)s(2)U34 oxidoreductase.

The protein in the N-terminal section; belongs to the methyltransferase superfamily. tRNA (mnm(5)s(2)U34)-methyltransferase family. It in the C-terminal section; belongs to the DAO family. The cofactor is FAD.

It localises to the cytoplasm. It catalyses the reaction 5-aminomethyl-2-thiouridine(34) in tRNA + S-adenosyl-L-methionine = 5-methylaminomethyl-2-thiouridine(34) in tRNA + S-adenosyl-L-homocysteine + H(+). Functionally, catalyzes the last two steps in the biosynthesis of 5-methylaminomethyl-2-thiouridine (mnm(5)s(2)U) at the wobble position (U34) in tRNA. Catalyzes the FAD-dependent demodification of cmnm(5)s(2)U34 to nm(5)s(2)U34, followed by the transfer of a methyl group from S-adenosyl-L-methionine to nm(5)s(2)U34, to form mnm(5)s(2)U34. In Legionella pneumophila subsp. pneumophila (strain Philadelphia 1 / ATCC 33152 / DSM 7513), this protein is tRNA 5-methylaminomethyl-2-thiouridine biosynthesis bifunctional protein MnmC.